Reading from the N-terminus, the 190-residue chain is Protein LZIC (190 aa).

Positions 6-64 (KSETSKLRQNMEEQLDRLMQQLQDLEECREDLEEEEYEETKKETLEQLSEFNDSLKKLM) form a coiled coil.

The protein belongs to the CTNNBIP1 family. In terms of assembly, does not interact with CTNNB1.

Functionally, required for neuronal survival during early development. The sequence is that of Protein LZIC (lzic) from Danio rerio (Zebrafish).